The chain runs to 438 residues: ATP-dependent RNA helicase RhlB (438 aa).

Positions 9-37 (QRFADLPLHPEVKQALAENGFEFCTPIQA) match the Q motif motif. The Helicase ATP-binding domain occupies 40–219 (LPVLLQSKDI…YDHMNEPVKV (180 aa)). ATP is bound at residue 53-60 (AQTGTGKT). The DEAD box signature appears at 165-168 (DEAD). In terms of domain architecture, Helicase C-terminal spans 243–390 (KMRLLLTLIE…VSNYDSEALL (148 aa)). Residues 395 to 438 (TPAKIHRKHPSGTRNLRDRSGASRPGAQRSGARPPRHDRTRRHS) are disordered. Over residues 428 to 438 (PPRHDRTRRHS) the composition is skewed to basic residues.

Belongs to the DEAD box helicase family. RhlB subfamily. In terms of assembly, component of the RNA degradosome, which is a multiprotein complex involved in RNA processing and mRNA degradation.

Its subcellular location is the cytoplasm. The enzyme catalyses ATP + H2O = ADP + phosphate + H(+). Functionally, DEAD-box RNA helicase involved in RNA degradation. Has RNA-dependent ATPase activity and unwinds double-stranded RNA. The sequence is that of ATP-dependent RNA helicase RhlB from Shewanella baltica (strain OS185).